A 57-amino-acid chain; its full sequence is uncharacterized protein (57 aa).

The protein resides in the plastid. This is an uncharacterized protein from Euglena longa (Euglenophycean alga).